We begin with the raw amino-acid sequence, 214 residues long: tRNA (guanine-N(7)-)-methyltransferase (214 aa).

The S-adenosyl-L-methionine site is built by glutamate 43, glutamate 68, aspartate 95, and aspartate 117. Aspartate 117 is a catalytic residue. Substrate-binding positions include lysine 121, aspartate 153, and threonine 191–glutamate 194.

Belongs to the class I-like SAM-binding methyltransferase superfamily. TrmB family.

The catalysed reaction is guanosine(46) in tRNA + S-adenosyl-L-methionine = N(7)-methylguanosine(46) in tRNA + S-adenosyl-L-homocysteine. The protein operates within tRNA modification; N(7)-methylguanine-tRNA biosynthesis. Functionally, catalyzes the formation of N(7)-methylguanine at position 46 (m7G46) in tRNA. This Lachnoclostridium phytofermentans (strain ATCC 700394 / DSM 18823 / ISDg) (Clostridium phytofermentans) protein is tRNA (guanine-N(7)-)-methyltransferase.